Consider the following 201-residue polypeptide: Small ribosomal subunit protein uS4 (201 aa).

Residues 91 to 157 (SRLDNVIYRA…VPFQIARETV (67 aa)) form the S4 RNA-binding domain.

Belongs to the universal ribosomal protein uS4 family. As to quaternary structure, part of the 30S ribosomal subunit. Contacts protein S5. The interaction surface between S4 and S5 is involved in control of translational fidelity.

Its function is as follows. One of the primary rRNA binding proteins, it binds directly to 16S rRNA where it nucleates assembly of the body of the 30S subunit. With S5 and S12 plays an important role in translational accuracy. This chain is Small ribosomal subunit protein uS4, found in Mycobacterium leprae (strain Br4923).